A 673-amino-acid polypeptide reads, in one-letter code: Centrosomal protein kizuna (673 aa).

Disordered stretches follow at residues 175–207, 255–413, 432–480, 494–516, and 613–673; these read TEHKSPQPTKNFSIPDPHSHRQTAQSSNVTDSC, GSNT…ALKL, QTLS…NSVK, ECGRRSAIHSSESSCSLPSILND, and SEAS…DFYD. Polar residues-rich tracts occupy residues 196–207 and 255–266; these read QTAQSSNVTDSC and GSNTRHGKSNLS. Composition is skewed to basic and acidic residues over residues 267–293 and 303–316; these read EGKKSAELNSPLRERLSPENRTTDLKC and ILTREHIEVEEKRA. Ser317 and Ser321 each carry phosphoserine. The span at 331 to 357 shows a compositional bias: basic and acidic residues; it reads SENKWSQEKHSPWEGVSDHLAHREPKS. Thr379 bears the Phosphothreonine; by PLK1 mark. Residues 471-480 show a composition bias toward basic and acidic residues; sequence TLKEHDNSVK. Composition is skewed to low complexity over residues 503–512 and 613–625; these read SSESSCSLPS and SEASFSSSEGSPL. Phosphoserine is present on residues Ser647, Ser650, and Ser652.

It belongs to the kizuna family. In terms of assembly, interacts with AKAP9, CEP72, ODF2, PCNT and TUBGCP2. Post-translationally, phosphorylation at Thr-379 by PLK1 is not needed for centrosomal localization or pericentriolar material expansion but is indispensable for spindle-pole stabilization.

It is found in the cytoplasm. Its subcellular location is the cytoskeleton. The protein localises to the microtubule organizing center. The protein resides in the centrosome. It localises to the cilium basal body. In terms of biological role, centrosomal protein required for establishing a robust mitotic centrosome architecture that can endure the forces that converge on the centrosomes during spindle formation. Required for stabilizing the expanded pericentriolar material around the centriole. In Homo sapiens (Human), this protein is Centrosomal protein kizuna (KIZ).